Here is a 317-residue protein sequence, read N- to C-terminus: L-lactate dehydrogenase (317 aa).

NAD(+) contacts are provided by residues 16–17 (FV), Asp-38, Lys-43, Tyr-69, and 83–84 (GA). Gln-86 and Arg-92 together coordinate substrate. NAD(+) contacts are provided by residues Ser-105, 122-124 (ATN), and Ser-147. Residue 124-127 (NPVD) coordinates substrate. Residue 152-155 (DTAR) participates in substrate binding. Beta-D-fructose 1,6-bisphosphate is bound by residues Arg-157 and 169 to 172 (QNVH). The active-site Proton acceptor is His-179. Tyr-224 is subject to Phosphotyrosine. Thr-233 is a substrate binding site.

The protein belongs to the LDH/MDH superfamily. LDH family. As to quaternary structure, exists as a dimer and a tetramer (dimer of dimers). The conversion occurs via the binding of fructose 1,6-bisphosphate (FBP) to the dimer.

The protein localises to the cytoplasm. The catalysed reaction is (S)-lactate + NAD(+) = pyruvate + NADH + H(+). It functions in the pathway fermentation; pyruvate fermentation to lactate; (S)-lactate from pyruvate: step 1/1. Its activity is regulated as follows. Allosterically activated by fructose 1,6-bisphosphate (FBP). The improvement in affinity for substrate occurs in two steps; the binding of fructose 1,6-bisphosphate (FBP) to the dimer, and the dimer to tetramer conversion. Catalyzes the conversion of lactate to pyruvate. This is L-lactate dehydrogenase from Geobacillus stearothermophilus (Bacillus stearothermophilus).